The primary structure comprises 432 residues: Putative D-alanyl-D-alanine carboxypeptidase (432 aa).

Residues A7–L25 traverse the membrane as a helical; Signal-anchor segment.

It belongs to the peptidase S12 family. YfeW subfamily.

It is found in the cell inner membrane. It carries out the reaction Preferential cleavage: (Ac)2-L-Lys-D-Ala-|-D-Ala. Also transpeptidation of peptidyl-alanyl moieties that are N-acyl substituents of D-alanine.. The sequence is that of Putative D-alanyl-D-alanine carboxypeptidase from Salmonella agona (strain SL483).